The following is a 339-amino-acid chain: Glycerol-3-phosphate dehydrogenase [NAD(P)+] (339 aa).

NADPH-binding residues include Ser-15, Tyr-16, His-36, and Lys-110. Sn-glycerol 3-phosphate contacts are provided by Lys-110, Gly-139, and Thr-141. Ala-143 is an NADPH binding site. Sn-glycerol 3-phosphate-binding residues include Lys-195, Asp-248, Ser-258, Arg-259, and Asn-260. Residue Lys-195 is the Proton acceptor of the active site. Arg-259 contacts NADPH. Residues Val-283 and Glu-285 each coordinate NADPH.

The protein belongs to the NAD-dependent glycerol-3-phosphate dehydrogenase family.

The protein localises to the cytoplasm. It catalyses the reaction sn-glycerol 3-phosphate + NAD(+) = dihydroxyacetone phosphate + NADH + H(+). The catalysed reaction is sn-glycerol 3-phosphate + NADP(+) = dihydroxyacetone phosphate + NADPH + H(+). Its pathway is membrane lipid metabolism; glycerophospholipid metabolism. In terms of biological role, catalyzes the reduction of the glycolytic intermediate dihydroxyacetone phosphate (DHAP) to sn-glycerol 3-phosphate (G3P), the key precursor for phospholipid synthesis. The chain is Glycerol-3-phosphate dehydrogenase [NAD(P)+] from Serratia proteamaculans (strain 568).